The primary structure comprises 346 residues: Calcium uniporter protein, mitochondrial (346 aa).

Residues 1 to 195 (MTKGKLLTTP…ECDKAAHRGA (195 aa)) lie on the Mitochondrial matrix side of the membrane. A disordered region spans residues 55 to 120 (ELPPPDPQDS…GEGKDEGEFV (66 aa)). Composition is skewed to basic and acidic residues over residues 76–91 (MEAK…KADT) and 109–119 (REGEGKDEGEF). A helical membrane pass occupies residues 196-216 (QRIALAGCGGLIGYWYIVYRL). At 217-226 (TFETDLGWDV) the chain is on the mitochondrial intermembrane side. The short motif at 224–232 (WDVMEPVTY) is the Selectivity filter element. A helical membrane pass occupies residues 227–248 (MEPVTYLVGLSTLIGGYMWFLW). Ca(2+) is bound at residue E228. Residues 249–346 (HNREVSYRSA…KEGEEDDEDD (98 aa)) are Mitochondrial matrix-facing. Residues 306–346 (WNETQDEGGDEKVTKALRDERKNNNGTKNKSKEGEEDDEDD) are disordered. A compositionally biased stretch (basic and acidic residues) spans 315 to 328 (DEKVTKALRDERKN).

Belongs to the MCU (TC 1.A.77) family. In terms of assembly, homotetramer, assembles in a dimer or dimers configuration with two interfaces.

It localises to the mitochondrion inner membrane. The enzyme catalyses Ca(2+)(in) = Ca(2+)(out). Highly selective calcium channel localized to the inner mitochondrial membrane, which mediates calcium uptake into the mitochondrial matrix. Mitochondrial calcium homeostasis plays key roles in cellular physiology and regulates ATP production, cytoplasmic calcium signals and activation of cell death pathways. Sufficient to operate as a pore-forming channel without the need of calcium-sensor or auxiliary subunit. This chain is Calcium uniporter protein, mitochondrial, found in Cyphellophora europaea (strain CBS 101466) (Phialophora europaea).